A 377-amino-acid polypeptide reads, in one-letter code: Mannan endo-1,4-beta-mannosidase A (377 aa).

The N-terminal stretch at 1–18 (MKLSHMLLSLASLGVATA) is a signal peptide. Trp-84 contacts substrate. Asn-105 carries an N-linked (GlcNAc...) asparagine glycan. Asn-197 contributes to the substrate binding site. The active-site Proton donor is the Glu-198. An N-linked (GlcNAc...) asparagine glycan is attached at Asn-255. Residue Tyr-273 coordinates substrate. Glu-306 acts as the Nucleophile in catalysis. N-linked (GlcNAc...) asparagine glycosylation is present at Asn-326. Trp-336 is a binding site for substrate. An N-linked (GlcNAc...) asparagine glycan is attached at Asn-357.

The protein belongs to the glycosyl hydrolase 5 (cellulase A) family.

The protein localises to the secreted. The enzyme catalyses Random hydrolysis of (1-&gt;4)-beta-D-mannosidic linkages in mannans, galactomannans and glucomannans.. Endo-1,4-mannanase, a crucial enzyme for depolymerization of seed galactomannans and wood galactoglucomannans. This chain is Mannan endo-1,4-beta-mannosidase A (manA), found in Aspergillus aculeatus.